Consider the following 154-residue polypeptide: Myoglobin (154 aa).

Residues 2–148 (GLSDGEWQLV…FRKDIAAKYK (147 aa)) enclose the Globin domain. S4 is subject to Phosphoserine. Residue H65 coordinates nitrite. O2 is bound at residue H65. T68 is modified (phosphothreonine). H94 lines the heme b pocket.

Belongs to the globin family. Monomeric.

It localises to the cytoplasm. Its subcellular location is the sarcoplasm. The enzyme catalyses Fe(III)-heme b-[protein] + nitric oxide + H2O = Fe(II)-heme b-[protein] + nitrite + 2 H(+). It carries out the reaction H2O2 + AH2 = A + 2 H2O. Its function is as follows. Monomeric heme protein which primary function is to store oxygen and facilitate its diffusion within muscle tissues. Reversibly binds oxygen through a pentacoordinated heme iron and enables its timely and efficient release as needed during periods of heightened demand. Depending on the oxidative conditions of tissues and cells, and in addition to its ability to bind oxygen, it also has a nitrite reductase activity whereby it regulates the production of bioactive nitric oxide. Under stress conditions, like hypoxia and anoxia, it also protects cells against reactive oxygen species thanks to its pseudoperoxidase activity. The sequence is that of Myoglobin (MB) from Castor fiber (Eurasian beaver).